We begin with the raw amino-acid sequence, 674 residues long: Multifunctional alkene reductase/demethylase OYE (674 aa).

FMN is bound by residues Gly62 and Gln105. Catalysis depends on His175, which acts as the Proton donor. Residues Arg223 and Lys299 each coordinate FMN. 3 residues coordinate [4Fe-4S] cluster: Cys345, Cys351, and Cys358. Residues Ala391, Gln418, and Arg428 each contribute to the FAD site.

This sequence in the N-terminal section; belongs to the NADH:flavin oxidoreductase/NADH oxidase family. Requires [4Fe-4S] cluster as cofactor. FAD serves as cofactor. FMN is required as a cofactor.

It catalyses the reaction 3-phenylpropanoate + NAD(+) = (E)-cinnamate + NADH + H(+). The catalysed reaction is N-methyl-L-proline + NAD(+) + H2O = L-proline + formaldehyde + NADH + H(+). Its function is as follows. A member of the 2-enoate reductase subfamily of old yellow enzymes (OYE) able to reduce alpha/beta alkenes near electron-withdrawing groups as well as perform oxidative demethylation chemistry. Prefers NADH over NADPH as cosubstrate. May play a role in osmotic stress response in situ. The sequence is that of Multifunctional alkene reductase/demethylase OYE from Caballeronia cordobensis (Burkholderia cordobensis).